A 152-amino-acid chain; its full sequence is Large ribosomal subunit protein uL13 (152 aa).

This sequence belongs to the universal ribosomal protein uL13 family. Part of the 50S ribosomal subunit.

In terms of biological role, this protein is one of the early assembly proteins of the 50S ribosomal subunit, although it is not seen to bind rRNA by itself. It is important during the early stages of 50S assembly. The protein is Large ribosomal subunit protein uL13 of Wolbachia pipientis wMel.